Reading from the N-terminus, the 70-residue chain is MRLEKIAAKALENVGFDRYLLSIAVAKRANELATGKEPLVEVDVKKYKYTDIALMEIAEGKLKIEVEKES.

The protein belongs to the RNA polymerase subunit omega family. The RNAP catalytic core consists of 2 alpha, 1 beta, 1 beta' and 1 omega subunit. When a sigma factor is associated with the core the holoenzyme is formed, which can initiate transcription.

The catalysed reaction is RNA(n) + a ribonucleoside 5'-triphosphate = RNA(n+1) + diphosphate. In terms of biological role, promotes RNA polymerase assembly. Latches the N- and C-terminal regions of the beta' subunit thereby facilitating its interaction with the beta and alpha subunits. The polypeptide is DNA-directed RNA polymerase subunit omega (Nitratiruptor sp. (strain SB155-2)).